The sequence spans 398 residues: MTPSRKPARPGAKKVVSQEPSAKASRPKPSSQSKSKAQPKAKPESKPQAKSQAKPQAKSKPVEGKSQGASKGLHPRNLHGQGYDFDALMDTTPELKPFVRPNPYGNLSIDFADPRAVKLLNLALLRLHYGLSYWDIPEGFLCPPIPGRVDYLHYLADLLAESTPASKGGKRKLPNVTRAPKGERVVALDIGTGANGIYPLLGHQVYGWRFVASDIDPVSLKNVERIIANNPQLAGKLSLRLQSDSKQIFTGIIRAEDRFDLTLCNPPFHASLAEASRGSERKLKNLAANKRAKGHEVAKSKEKLNFGGQKAELWCEGGEQAFLGQMIRESQKFGSQCLWFTSLVSKKENLKPCYRLLEQVGAKRVETLEMAQGNKLTRVLAWTFLTPEQHSLWGLYRV.

Positions 1-12 (MTPSRKPARPGA) are enriched in basic residues. The disordered stretch occupies residues 1-85 (MTPSRKPARP…RNLHGQGYDF (85 aa)). 2 stretches are compositionally biased toward low complexity: residues 20 to 40 (PSAKASRPKPSSQSKSKAQPK) and 48 to 59 (QAKSQAKPQAKS).

Belongs to the methyltransferase superfamily. METTL16/RlmF family.

It localises to the cytoplasm. It catalyses the reaction adenosine(1618) in 23S rRNA + S-adenosyl-L-methionine = N(6)-methyladenosine(1618) in 23S rRNA + S-adenosyl-L-homocysteine + H(+). Its function is as follows. Specifically methylates the adenine in position 1618 of 23S rRNA. The chain is Ribosomal RNA large subunit methyltransferase F from Shewanella loihica (strain ATCC BAA-1088 / PV-4).